Here is a 157-residue protein sequence, read N- to C-terminus: MKLNEIPAVPGNQQSRNRVGRGPGSGNGKTAGRGHKGQKARSGGFHKSGFEGGQMPLQRRLPKRGFKNFTRKEYTIVQVEDLEKFFDAGSEVNAEALNDLGLLGKKQKSGIKLLANGDITKAITVYVDKASAAAVAKMEAAGGKVVLAVVADPEGDA.

Residues Met1–Arg64 form a disordered region. Gly residues predominate over residues Arg21 to Ala31.

Belongs to the universal ribosomal protein uL15 family. Part of the 50S ribosomal subunit.

Functionally, binds to the 23S rRNA. The chain is Large ribosomal subunit protein uL15 from Magnetococcus marinus (strain ATCC BAA-1437 / JCM 17883 / MC-1).